A 309-amino-acid polypeptide reads, in one-letter code: Homoserine kinase (309 aa).

Position 91-101 (91-101) interacts with ATP; that stretch reads PIGSGLGSSAC.

It belongs to the GHMP kinase family. Homoserine kinase subfamily.

It localises to the cytoplasm. It carries out the reaction L-homoserine + ATP = O-phospho-L-homoserine + ADP + H(+). It participates in amino-acid biosynthesis; L-threonine biosynthesis; L-threonine from L-aspartate: step 4/5. Functionally, catalyzes the ATP-dependent phosphorylation of L-homoserine to L-homoserine phosphate. The chain is Homoserine kinase (thrB) from Serratia marcescens.